A 927-amino-acid chain; its full sequence is SPX and EXS domain-containing protein 5 (927 aa).

The 460-residue stretch at 1 to 460 folds into the SPX domain; the sequence is MKFGKYLESQ…GLSIGSQVMS (460 aa). Disordered regions lie at residues 54–78, 204–239, 257–305, and 326–355; these read KINS…SSSN, KKNK…QHLQ, PIKS…DQDP, and SDNC…GGNN. Low complexity-rich tracts occupy residues 60–78 and 208–224; these read PSPT…SSSN and LNNN…NNNN. Residues 257–270 are compositionally biased toward polar residues; sequence PIKSTPLSPKQQDG. Over residues 286–299 the composition is skewed to acidic residues; the sequence is LEEEEEEEEEEDDN. 8 helical membrane-spanning segments follow: residues 516–536, 553–573, 597–617, 636–656, 682–702, 769–789, 845–862, and 869–889; these read FFSG…YYFI, VYSA…DCWV, IFQA…VYMW, PLVL…IFQL, FFMG…AQFV, LSIV…DSGW, FVYY…TTWT, and QLTN…IEIL. An EXS domain is found at 717-927; sequence GCIRYARYFN…LPYQIRDNEN (211 aa).

The protein belongs to the SYG1 (TC 2.A.94) family.

The protein localises to the membrane. This Dictyostelium discoideum (Social amoeba) protein is SPX and EXS domain-containing protein 5.